A 357-amino-acid chain; its full sequence is UDP-N-acetylglucosamine--N-acetylmuramyl-(pentapeptide) pyrophosphoryl-undecaprenol N-acetylglucosamine transferase (357 aa).

UDP-N-acetyl-alpha-D-glucosamine is bound by residues 14–16 (TGG), N128, R169, S193, I248, and Q292.

It belongs to the glycosyltransferase 28 family. MurG subfamily.

The protein resides in the cell inner membrane. The catalysed reaction is di-trans,octa-cis-undecaprenyl diphospho-N-acetyl-alpha-D-muramoyl-L-alanyl-D-glutamyl-meso-2,6-diaminopimeloyl-D-alanyl-D-alanine + UDP-N-acetyl-alpha-D-glucosamine = di-trans,octa-cis-undecaprenyl diphospho-[N-acetyl-alpha-D-glucosaminyl-(1-&gt;4)]-N-acetyl-alpha-D-muramoyl-L-alanyl-D-glutamyl-meso-2,6-diaminopimeloyl-D-alanyl-D-alanine + UDP + H(+). It functions in the pathway cell wall biogenesis; peptidoglycan biosynthesis. Its function is as follows. Cell wall formation. Catalyzes the transfer of a GlcNAc subunit on undecaprenyl-pyrophosphoryl-MurNAc-pentapeptide (lipid intermediate I) to form undecaprenyl-pyrophosphoryl-MurNAc-(pentapeptide)GlcNAc (lipid intermediate II). This Bdellovibrio bacteriovorus (strain ATCC 15356 / DSM 50701 / NCIMB 9529 / HD100) protein is UDP-N-acetylglucosamine--N-acetylmuramyl-(pentapeptide) pyrophosphoryl-undecaprenol N-acetylglucosamine transferase.